Here is a 591-residue protein sequence, read N- to C-terminus: V-type ATP synthase alpha chain (591 aa).

233–240 (GPFGAGKT) provides a ligand contact to ATP.

Belongs to the ATPase alpha/beta chains family.

It carries out the reaction ATP + H2O + 4 H(+)(in) = ADP + phosphate + 5 H(+)(out). Produces ATP from ADP in the presence of a proton gradient across the membrane. The V-type alpha chain is a catalytic subunit. This Streptococcus pyogenes serotype M1 protein is V-type ATP synthase alpha chain.